The chain runs to 192 residues: LOB domain-containing protein 32 (192 aa).

Positions 4-105 (NRCAVCKILN…QDIESAVNEL (102 aa)) constitute an LOB domain.

It belongs to the LOB domain-containing protein family.

The sequence is that of LOB domain-containing protein 32 (LBD32) from Arabidopsis thaliana (Mouse-ear cress).